Here is a 349-residue protein sequence, read N- to C-terminus: Phenylalanine--tRNA ligase alpha subunit (349 aa).

Glu258 is a Mg(2+) binding site.

The protein belongs to the class-II aminoacyl-tRNA synthetase family. Phe-tRNA synthetase alpha subunit type 1 subfamily. Tetramer of two alpha and two beta subunits. Requires Mg(2+) as cofactor.

It localises to the cytoplasm. It carries out the reaction tRNA(Phe) + L-phenylalanine + ATP = L-phenylalanyl-tRNA(Phe) + AMP + diphosphate + H(+). In Rickettsia felis (strain ATCC VR-1525 / URRWXCal2) (Rickettsia azadi), this protein is Phenylalanine--tRNA ligase alpha subunit.